The following is a 73-amino-acid chain: Neutrophil elastase 2B (73 aa).

Residues 1–73 (IVGGRPARPH…SGGPLVCNGL (73 aa)) enclose the Peptidase S1 domain. Ser-64 acts as the Charge relay system in catalysis.

This sequence belongs to the peptidase S1 family. Elastase subfamily.

Its function is as follows. May be involved in the degradation of connective tissue in chronic lung disease. The sequence is that of Neutrophil elastase 2B from Equus caballus (Horse).